We begin with the raw amino-acid sequence, 275 residues long: 2-dehydro-3-deoxyphosphooctonate aldolase (275 aa).

This sequence belongs to the KdsA family.

It localises to the cytoplasm. It catalyses the reaction D-arabinose 5-phosphate + phosphoenolpyruvate + H2O = 3-deoxy-alpha-D-manno-2-octulosonate-8-phosphate + phosphate. It functions in the pathway carbohydrate biosynthesis; 3-deoxy-D-manno-octulosonate biosynthesis; 3-deoxy-D-manno-octulosonate from D-ribulose 5-phosphate: step 2/3. Its pathway is bacterial outer membrane biogenesis; lipopolysaccharide biosynthesis. The polypeptide is 2-dehydro-3-deoxyphosphooctonate aldolase (Francisella philomiragia subsp. philomiragia (strain ATCC 25017 / CCUG 19701 / FSC 153 / O#319-036)).